Reading from the N-terminus, the 92-residue chain is Small ribosomal subunit protein uS19 (92 aa).

It belongs to the universal ribosomal protein uS19 family.

Its function is as follows. Protein S19 forms a complex with S13 that binds strongly to the 16S ribosomal RNA. This is Small ribosomal subunit protein uS19 from Cellvibrio japonicus (strain Ueda107) (Pseudomonas fluorescens subsp. cellulosa).